Consider the following 389-residue polypeptide: Chalcone synthase 1 (389 aa).

Cys-164 is a catalytic residue.

This sequence belongs to the thiolase-like superfamily. Chalcone/stilbene synthases family.

The catalysed reaction is (E)-4-coumaroyl-CoA + 3 malonyl-CoA + 3 H(+) = 2',4,4',6'-tetrahydroxychalcone + 3 CO2 + 4 CoA. The protein operates within secondary metabolite biosynthesis; flavonoid biosynthesis. In terms of biological role, the primary product of this enzyme is 4,2',4',6'-tetrahydroxychalcone (also termed naringenin-chalcone or chalcone) which can under specific conditions spontaneously isomerize into naringenin. In Medicago sativa (Alfalfa), this protein is Chalcone synthase 1 (CHS1).